Here is a 726-residue protein sequence, read N- to C-terminus: AP-1 complex subunit beta-1 (726 aa).

The protein belongs to the adaptor complexes large subunit family. In terms of assembly, adaptor protein complex 1 (AP-1) is a heterotetramer composed of two large adaptins (gamma-type subunit APL4 and beta-type subunit APL2), a medium adaptin (mu-type subunit APM1) and a small adaptin (sigma-type subunit APS1). Interacts with CHC1. Interacts with APM2, probably forming an alternative AP-1-like complex.

The protein localises to the cell membrane. It is found in the membrane. It localises to the coated pit. In terms of biological role, adaptins are components of the adaptor complexes which link clathrin to receptors in coated vesicles. Clathrin-associated protein complexes are believed to interact with the cytoplasmic tails of membrane proteins, leading to their selection and concentration. The AP-1 complex interacts directly with clathrin. The polypeptide is AP-1 complex subunit beta-1 (APL2) (Saccharomyces cerevisiae (strain ATCC 204508 / S288c) (Baker's yeast)).